The following is a 329-amino-acid chain: Ketol-acid reductoisomerase (NADP(+)) (329 aa).

The KARI N-terminal Rossmann domain maps to 2–182 (TQLFYDTDAD…GGTRAGILET (181 aa)). Residues 25–28 (YGSQ), S51, S53, and 83–86 (DEFQ) each bind NADP(+). H108 is an active-site residue. Residue G134 coordinates NADP(+). Residues 183–328 (NFKEETETDL…KGLRSMFSWL (146 aa)) form the KARI C-terminal knotted domain. Positions 191, 195, 227, and 231 each coordinate Mg(2+). Residue S252 coordinates substrate.

This sequence belongs to the ketol-acid reductoisomerase family. Requires Mg(2+) as cofactor.

The enzyme catalyses (2R)-2,3-dihydroxy-3-methylbutanoate + NADP(+) = (2S)-2-acetolactate + NADPH + H(+). The catalysed reaction is (2R,3R)-2,3-dihydroxy-3-methylpentanoate + NADP(+) = (S)-2-ethyl-2-hydroxy-3-oxobutanoate + NADPH + H(+). The protein operates within amino-acid biosynthesis; L-isoleucine biosynthesis; L-isoleucine from 2-oxobutanoate: step 2/4. It participates in amino-acid biosynthesis; L-valine biosynthesis; L-valine from pyruvate: step 2/4. Its function is as follows. Involved in the biosynthesis of branched-chain amino acids (BCAA). Catalyzes an alkyl-migration followed by a ketol-acid reduction of (S)-2-acetolactate (S2AL) to yield (R)-2,3-dihydroxy-isovalerate. In the isomerase reaction, S2AL is rearranged via a Mg-dependent methyl migration to produce 3-hydroxy-3-methyl-2-ketobutyrate (HMKB). In the reductase reaction, this 2-ketoacid undergoes a metal-dependent reduction by NADPH to yield (R)-2,3-dihydroxy-isovalerate. In Prochlorococcus marinus (strain MIT 9215), this protein is Ketol-acid reductoisomerase (NADP(+)).